A 377-amino-acid chain; its full sequence is Lipoyl synthase, mitochondrial (377 aa).

Positions 103, 108, 114, 134, 138, 141, and 349 each coordinate [4Fe-4S] cluster. A Radical SAM core domain is found at 119–338 (EHGTQTATIM…EERGNELGFL (220 aa)).

It belongs to the radical SAM superfamily. Lipoyl synthase family. [4Fe-4S] cluster serves as cofactor.

It is found in the mitochondrion. It catalyses the reaction [[Fe-S] cluster scaffold protein carrying a second [4Fe-4S](2+) cluster] + N(6)-octanoyl-L-lysyl-[protein] + 2 oxidized [2Fe-2S]-[ferredoxin] + 2 S-adenosyl-L-methionine + 4 H(+) = [[Fe-S] cluster scaffold protein] + N(6)-[(R)-dihydrolipoyl]-L-lysyl-[protein] + 4 Fe(3+) + 2 hydrogen sulfide + 2 5'-deoxyadenosine + 2 L-methionine + 2 reduced [2Fe-2S]-[ferredoxin]. Its pathway is protein modification; protein lipoylation via endogenous pathway; protein N(6)-(lipoyl)lysine from octanoyl-[acyl-carrier-protein]: step 2/2. Functionally, catalyzes the radical-mediated insertion of two sulfur atoms into the C-6 and C-8 positions of the octanoyl moiety bound to the lipoyl domains of lipoate-dependent enzymes, thereby converting the octanoylated domains into lipoylated derivatives. This is Lipoyl synthase, mitochondrial from Drosophila sechellia (Fruit fly).